The primary structure comprises 700 residues: Phenylalanine ammonia-lyase hkm12 (700 aa).

Tyr-82 serves as the catalytic Proton donor/acceptor. The 5-imidazolinone (Ala-Gly) cross-link spans 183–185 (ASG). 2,3-didehydroalanine (Ser) is present on Ser-184. Positions 242, 325, 331, 361, 432, 460, and 463 each coordinate (E)-cinnamate.

This sequence belongs to the PAL/histidase family. Contains an active site 4-methylidene-imidazol-5-one (MIO), which is formed autocatalytically by cyclization and dehydration of residues Ala-Ser-Gly.

It carries out the reaction L-phenylalanine = (E)-cinnamate + NH4(+). It participates in secondary metabolite biosynthesis. Its function is as follows. Phenylalanine ammonia-lyase; part of the gene cluster that mediates the biosynthesis of hancockiamides, an unusual new family of N-cinnamoylated piperazines. The NRPS hkm10 and the NmrA-like reductase hkm9 are proposed to convert two molecules of L-Phe to the intermediary piperazine called xenocockiamide A. Xenocockiamide A is then converted to hancockiamide D via a series of hydroxylations and O-methylations. The tyrosinase hkm6 may catalyze an aromatic hydroxylation, then the 2-oxoglutarate-dependent Fe(II) dioxygenase hkm4 and the FAD-dependent phenol hydroxylase hkm7 may catalyze consecutive hydroxylations to install 2 more hydroxy groups, and the methyltransferase hkm8 probably catalyzes two methylations using 2 molecules of S-adenosyl-L-methionine (SAM). The NRPS hkm11 activates and transfers trans-cinnamate supplied by the PAL hkm12 to hancockiamide D and produces hancockiamide A. NRPS Hkm11 has the flexibility to tolerate the bulky hancockiamide G as a substrate and the absence of the acetyl-transferase hkm3 opens up the opportunity for hkm11 to introduce a second N-cinnamoyl moiety. The cytochrome P450 monooxygenase hkm5 catalyzes the methylenedioxy bridge formation, converting hancockiamide A into hancockiamide G. Hkm5 can also convert hancockiamide B into hancockiamide C, and hancockiamide D into hancockiamide H. The N-acetyltransferase hkm3 finally transfers an acetyl group to 1-N of piperazine, converting hancockiamide A into hancockiamide B and hancockiamide G into hancockiamide C. This chain is Phenylalanine ammonia-lyase hkm12, found in Aspergillus hancockii.